Reading from the N-terminus, the 478-residue chain is Zinc metalloproteinase/disintegrin (478 aa).

Positions 1–20 (MIEVLLVTICLAVFPYPGSS) are cleaved as a signal peptide. A propeptide spanning residues 21–190 (IILESGNVDD…KASQLYLTPE (170 aa)) is cleaved from the precursor. At Gln191 the chain carries Pyrrolidone carboxylic acid. The 196-residue stretch at 197–392 (RYIELAIVVD…SKPQCIINAP (196 aa)) folds into the Peptidase M12B domain. Residues Glu200 and Asp284 each coordinate Ca(2+). 3 disulfides stabilise this stretch: Cys308–Cys387, Cys349–Cys371, and Cys351–Cys354. Residue His333 coordinates Zn(2+). The active site involves Glu334. Zn(2+)-binding residues include His337 and His343. Ca(2+) contacts are provided by Cys387 and Asn390. Residues 393-410 (LRTDTVSTPVSGNEFLEA) constitute a propeptide that is removed on maturation. In terms of domain architecture, Disintegrin spans 400–478 (TPVSGNEFLE…GQSADCPRNS (79 aa)). 6 disulfide bridges follow: Cys414–Cys429, Cys416–Cys424, Cys423–Cys446, Cys437–Cys443, Cys442–Cys467, and Cys455–Cys474. The Cell attachment site signature appears at 459-461 (RGD). Residues 459–478 (RGDNPDDRCTGQSADCPRNS) form a disordered region. A compositionally biased stretch (polar residues) spans 468-478 (TGQSADCPRNS).

It belongs to the venom metalloproteinase (M12B) family. P-II subfamily. P-IIa sub-subfamily. As to quaternary structure, monomer. Zn(2+) is required as a cofactor. Post-translationally, not N-glycosylated. As to expression, expressed by the venom gland.

Its subcellular location is the secreted. It catalyses the reaction Cleavage of 3-Asn-|-Gln-4, 10-His-|-Leu-11 and 14-Ala-|-Leu-15 in the insulin B chain, and the bond Z-Gly-Pro-|-Leu-Gly-Pro in a small molecule substrate of microbial collagenase.. Its function is as follows. Zinc protease that induces hemorrhage. Inhibits platelet aggregation induced by ADP, thrombin, and collagen. Acts by inhibiting fibrinogen interaction with platelet receptors GPIIb/GPIIIa (ITGA2B/ITGB3). The protein is Zinc metalloproteinase/disintegrin of Protobothrops flavoviridis (Habu).